Here is a 191-residue protein sequence, read N- to C-terminus: ECF RNA polymerase sigma-E factor (191 aa).

The binds RNAP core stretch occupies residues 1 to 153 (MSEQLTDQVL…MAITLRELDG (153 aa)). The segment at 25–92 (LVVRYQHKVA…KNYLVAQGRR (68 aa)) is sigma-70 factor domain-2. A Polymerase core binding motif is present at residues 48–61 (DVVQEAFIKAYRAL). The interval 129–180 (QIVFRTIESLPEDLRMAITLRELDGLSYEEIAAIMDCPVGTVRSRIFRAREA) is sigma-70 factor domain-4. Positions 156-175 (YEEIAAIMDCPVGTVRSRIF) form a DNA-binding region, H-T-H motif.

Belongs to the sigma-70 factor family. ECF subfamily. In terms of assembly, interacts transiently with the RNAP catalytic core formed by RpoA, RpoB, RpoC and RpoZ (2 alpha, 1 beta, 1 beta' and 1 omega subunit) to form the RNAP holoenzyme that can initiate transcription. Interacts 1:1 with anti-sigma-E factor RseA which prevents binding to RNAP catalytic core.

Its subcellular location is the cytoplasm. Its activity is regulated as follows. ECF sigma-E is held in an inactive form by its cognate anti-sigma factor (RseA) until released by regulated intramembrane proteolysis (RIP). RIP occurs when an extracytoplasmic signal (periplasmic stress and excess LPS) triggers a concerted proteolytic cascade to transmit information and elicit cellular responses. The anti-sigma factor RseA is an inner membrane protein, binding sigma-E in the cytoplasm and RseB in the periplasm. RseA is first cut extracytoplasmically (site-1 protease, S1P, by DegS), then within the membrane itself (site-2 protease, S2P, by RseP), while cytoplasmic proteases (predominantly ClpX-ClpP) finish degrading the regulatory protein, liberating sigma-E. Degradation of RseA requires 2 signals to activate DegS; an outer membrane protein (OMP) signal activates DegS, while an LPS signal causes release of RseB from RseA, freeing RseA to be cleaved. Sigma factors are initiation factors that promote the attachment of RNA polymerase (RNAP) to specific initiation sites and are then released. Extracytoplasmic function (ECF) sigma-E controls the envelope stress response, responding to periplasmic protein stress, increased levels of periplasmic lipopolysaccharide (LPS) as well as heat shock and oxidative stress; it controls protein processing in the extracytoplasmic compartment. The protein is ECF RNA polymerase sigma-E factor (rpoE) of Escherichia coli O157:H7.